The sequence spans 339 residues: Phenylalanine--tRNA ligase alpha subunit (339 aa).

E253 lines the Mg(2+) pocket.

This sequence belongs to the class-II aminoacyl-tRNA synthetase family. Phe-tRNA synthetase alpha subunit type 1 subfamily. As to quaternary structure, tetramer of two alpha and two beta subunits. Requires Mg(2+) as cofactor.

It localises to the cytoplasm. The enzyme catalyses tRNA(Phe) + L-phenylalanine + ATP = L-phenylalanyl-tRNA(Phe) + AMP + diphosphate + H(+). The sequence is that of Phenylalanine--tRNA ligase alpha subunit from Chromohalobacter salexigens (strain ATCC BAA-138 / DSM 3043 / CIP 106854 / NCIMB 13768 / 1H11).